The chain runs to 407 residues: MKYDNLLDRFIKYVKVNTRSVPDSETTPSTESQEAFALTILKPEMEAIGLQDVHYNPVNGYLIGTLPANNPTLTRKIGFIAHMDTADFNAENVNPQIIDNYQGGDITLGSSNYKLDPKAFPNLNNYIGQTLITTDGTTLLGADDKSGIAEIMTAIEFLTSQPQIEHCDIKVAFGPDEEIGVGADKFEVADFEVDFAYTMDGGPLGELQYETFSAAALEVTFLGRNVHPGTAKDQMINALELAIDFHEKLPAKDRPEYTDGYQGFYHLTGLTGTVEEARASYIIRDFEEASFEARKVKVENIAQSMNAQLGTKRVLVELNDQYYNMKKVIEKDMTAIELAKEVMEELAIKPVIEPIRGGTDGSKISFMGIPTPNIFAGGENMHGRFEFVSLQTMERAVDVIIGLVCKA.

Residue histidine 82 participates in Zn(2+) binding. The active site involves aspartate 84. Aspartate 143 is a binding site for Zn(2+). Catalysis depends on glutamate 177, which acts as the Proton acceptor. Positions 178, 200, and 382 each coordinate Zn(2+).

The protein belongs to the peptidase M20B family. It depends on Zn(2+) as a cofactor.

Its subcellular location is the cytoplasm. It carries out the reaction Release of the N-terminal residue from a tripeptide.. Functionally, cleaves the N-terminal amino acid of tripeptides. This is Peptidase T from Streptococcus pyogenes serotype M1.